The chain runs to 200 residues: MKNKADNKKRNFLTHSEIESLLKAANTGPHAARNYCLTLLCFIHGFRASEICRLRISDIDLKAKCIYIHRLKKGFSTTHPLLNKEVQALKNWLSIRTSYPHAESEWVFLSRKGNPLSRQQFYHIISTSGGNAGLSLEIHPHMLRHSCGFALANMGIDTRLIQDYLGHRNIRHTVWYTASNAGRFYGIWDRARGRQRHAVL.

Residues 8–189 (KKRNFLTHSE…NAGRFYGIWD (182 aa)) form the Tyr recombinase domain. Active-site residues include arginine 47, lysine 72, histidine 141, arginine 144, and histidine 167. The active-site O-(3'-phospho-DNA)-tyrosine intermediate is the tyrosine 176.

Belongs to the 'phage' integrase family.

In terms of biological role, fimB is one of the 2 regulatory proteins which control the phase variation of type 1 fimbriae in E.coli. These proteins mediate the periodic inversion of a 300bp DNA segment that harbors the promoter for the fimbrial structural gene, fimA. FimB switches fimA on. This chain is Type 1 fimbriae regulatory protein FimB (fimB), found in Escherichia coli O157:H7.